The chain runs to 517 residues: MAALGPSSQNVTEYVVRVPKNTTKKYNIMAFNAADKVNFATWNQARLERDLSNKKIYQEEEMPESGAGSEFNRKLREEARRKKYGIVLKEFRPEDQPWLLRVNGKSGRKFKGIKKGGVTENTSYYIFTQCPDGAFEAFPVHNWYNFTPLARHRTLTAEEAEEEWERRNKVLNHFSIMQQRRLKDQDQDEDEEEKEKRGRRKASELRIHDLEDDLEMSSDASDASGEEGGRVPKAKKKAPLAKGGRKKKKKKGSDDEAFEDSDDGDFEGQEVDYMSDGSSSSQEEPESKAKAPQQEEGPKGVDEQSDSSEESEEEKPPEEDKEEEEEKKAPTPQEKKRRKDSSEESDSSEESDIDSEASSALFMAKKKTPPKRERKPSGGSSRGNSRPGTPSAEGGSTSSTLRAAASKLEQGKRVSEMPAAKRLRLDTGPQSLSGKSTPQPPSGKTTPNSGDVQVTEDAVRRYLTRKPMTTKDLLKKFQTKKTGLSSEQTVNVLAQILKRLNPERKMINDKMHFSLKE.

Residue A2 is modified to N-acetylalanine. T156 is subject to Phosphothreonine. A disordered region spans residues 178-466 (QQRRLKDQDQ…DAVRRYLTRK (289 aa)). Residues S217, S218, S221, and S224 each carry the phosphoserine modification. Over residues 232–251 (PKAKKKAPLAKGGRKKKKKK) the composition is skewed to basic residues. Composition is skewed to acidic residues over residues 255–270 (DEAF…EGQE) and 303–325 (EQSD…EEEE). T331 carries the phosphothreonine modification. Over residues 343 to 355 (EESDSSEESDIDS) the composition is skewed to acidic residues. Over residues 364–374 (AKKKTPPKRER) the composition is skewed to basic residues. 4 positions are modified to phosphoserine: S377, S380, S381, and S385. Residues 377-391 (SGGSSRGNSRPGTPS) are compositionally biased toward low complexity. Residue T389 is modified to Phosphothreonine. At S391 the chain carries Phosphoserine. K407 carries the N6-acetyllysine modification. The segment covering 428–452 (GPQSLSGKSTPQPPSGKTTPNSGDV) has biased composition (polar residues). A phosphoserine mark is found at S431, S433, and S436. T437 and T446 each carry phosphothreonine. Position 449 is a phosphoserine (S449). Zn(2+) contacts are provided by E503, H512, and E517.

This sequence belongs to the TFIIF alpha subunit family. As to quaternary structure, heterodimer of an alpha and a beta subunit. Interacts with GTF2F2, CTDP1, TAF6/TAFII80 and URI1. Interacts with GTF2B (via C-terminus and preferentially via acetylated form); this interaction prevents binding of GTF2B to GTF2F2. Part of TBP-based Pol II pre-initiation complex (PIC), in which Pol II core assembles with general transcription factors and other specific initiation factors including GTF2E1, GTF2E2, GTF2F1, GTF2F2, TCEA1, ERCC2, ERCC3, GTF2H2, GTF2H3, GTF2H4, GTF2H5, GTF2A1, GTF2A2, GTF2B and TBP; this large multi-subunit PIC complex mediates DNA unwinding and targets Pol II core to the transcription start site where the first phosphodiester bond forms. Post-translationally, phosphorylated on Ser and other residues by TAF1 and casein kinase II-like kinases.

It localises to the nucleus. In terms of biological role, TFIIF is a general transcription initiation factor that binds to RNA polymerase II and helps to recruit it to the initiation complex in collaboration with TFIIB. It promotes transcription elongation. This is General transcription factor IIF subunit 1 (GTF2F1) from Homo sapiens (Human).